Here is a 269-residue protein sequence, read N- to C-terminus: Small ribosomal subunit protein uS2 (269 aa).

The tract at residues 228–269 (QLDSDDDYEEFDESLAEGDYDDYDEEEDEDSETVSSQEGEEE) is disordered. Acidic residues predominate over residues 230 to 269 (DSDDDYEEFDESLAEGDYDDYDEEEDEDSETVSSQEGEEE).

Belongs to the universal ribosomal protein uS2 family.

The protein is Small ribosomal subunit protein uS2 of Crocosphaera subtropica (strain ATCC 51142 / BH68) (Cyanothece sp. (strain ATCC 51142)).